The sequence spans 233 residues: Aspartate/glutamate leucyltransferase (233 aa).

This sequence belongs to the R-transferase family. Bpt subfamily.

Its subcellular location is the cytoplasm. The enzyme catalyses N-terminal L-glutamyl-[protein] + L-leucyl-tRNA(Leu) = N-terminal L-leucyl-L-glutamyl-[protein] + tRNA(Leu) + H(+). It carries out the reaction N-terminal L-aspartyl-[protein] + L-leucyl-tRNA(Leu) = N-terminal L-leucyl-L-aspartyl-[protein] + tRNA(Leu) + H(+). Functionally, functions in the N-end rule pathway of protein degradation where it conjugates Leu from its aminoacyl-tRNA to the N-termini of proteins containing an N-terminal aspartate or glutamate. This Vibrio cholerae serotype O1 (strain ATCC 39315 / El Tor Inaba N16961) protein is Aspartate/glutamate leucyltransferase.